A 258-amino-acid polypeptide reads, in one-letter code: Hydroxyacylglutathione hydrolase (258 aa).

7 residues coordinate Zn(2+): His52, His54, Asp56, His57, His109, Asp126, and His164.

It belongs to the metallo-beta-lactamase superfamily. Glyoxalase II family. Monomer. Zn(2+) is required as a cofactor.

The catalysed reaction is an S-(2-hydroxyacyl)glutathione + H2O = a 2-hydroxy carboxylate + glutathione + H(+). Its pathway is secondary metabolite metabolism; methylglyoxal degradation; (R)-lactate from methylglyoxal: step 2/2. Thiolesterase that catalyzes the hydrolysis of S-D-lactoyl-glutathione to form glutathione and D-lactic acid. This is Hydroxyacylglutathione hydrolase from Xylella fastidiosa (strain 9a5c).